We begin with the raw amino-acid sequence, 299 residues long: Very long chain fatty acid elongase 5 (299 aa).

At methionine 1 the chain carries N-acetylmethionine. A run of 7 helical transmembrane segments spans residues 26–46 (WFLLDNYIPTFVCSVIYLLIV), 64–84 (ILQLYNLGLTLLSLYMFYELV), 112–132 (VLWWYYFSKLIEFMDTFFFIL), 139–158 (ITVLHVYHHATMLNIWWFVM), 168–187 (FGATLNSFIHVLMYSYYGLS), 205–225 (GQLVQFVLTIIQTTCGVFWPC), and 227–247 (FPLGWLFFQIGYMISLIALFT). The tract at residues 274–299 (VAAVNGHTNSFPSLENSVKPRKQRKD) is disordered. The segment covering 279–289 (GHTNSFPSLEN) has biased composition (polar residues).

It belongs to the ELO family. ELOVL5 subfamily. As to quaternary structure, interacts with TECR.

The protein resides in the endoplasmic reticulum membrane. Its subcellular location is the cell projection. It is found in the dendrite. It carries out the reaction a very-long-chain acyl-CoA + malonyl-CoA + H(+) = a very-long-chain 3-oxoacyl-CoA + CO2 + CoA. The enzyme catalyses (6Z,9Z,12Z)-octadecatrienoyl-CoA + malonyl-CoA + H(+) = (8Z,11Z,14Z)-3-oxoeicosatrienoyl-CoA + CO2 + CoA. The catalysed reaction is (9Z,12Z,15Z)-octadecatrienoyl-CoA + malonyl-CoA + H(+) = (11Z,14Z,17Z)-3-oxoeicosatrienoyl-CoA + CO2 + CoA. It catalyses the reaction (9Z)-hexadecenoyl-CoA + malonyl-CoA + H(+) = 3-oxo-(11Z)-octadecenoyl-CoA + CO2 + CoA. It carries out the reaction (9Z)-octadecenoyl-CoA + malonyl-CoA + H(+) = 3-oxo-(11Z)-eicosenoyl-CoA + CO2 + CoA. The enzyme catalyses (11Z)-octadecenoyl-CoA + malonyl-CoA + H(+) = 3-oxo-(13Z)-eicosenoyl-CoA + CO2 + CoA. The catalysed reaction is (9Z,12Z)-octadecadienoyl-CoA + malonyl-CoA + H(+) = (11Z,14Z)-3-oxoicosa-11,14-dienoyl-CoA + CO2 + CoA. It catalyses the reaction (6Z,9Z,12Z,15Z)-octadecatetraenoyl-CoA + malonyl-CoA + H(+) = (8Z,11Z,14Z,17Z)-3-oxoicosatetraenoyl-CoA + CO2 + CoA. It carries out the reaction (5Z,8Z,11Z,14Z)-eicosatetraenoyl-CoA + malonyl-CoA + H(+) = (7Z,10Z,13Z,16Z)-3-oxodocosatetraenoyl-CoA + CO2 + CoA. The enzyme catalyses (5Z,8Z,11Z,14Z,17Z)-eicosapentaenoyl-CoA + malonyl-CoA + H(+) = 3-oxo-(7Z,10Z,13Z,16Z,19Z)-docosapentaenoyl-CoA + CO2 + CoA. Its pathway is lipid metabolism; polyunsaturated fatty acid biosynthesis. In terms of biological role, catalyzes the first and rate-limiting reaction of the four reactions that constitute the long-chain fatty acids elongation cycle. This endoplasmic reticulum-bound enzymatic process allows the addition of 2 carbons to the chain of long- and very long-chain fatty acids (VLCFAs) per cycle. Condensing enzyme that acts specifically toward polyunsaturated acyl-CoA with the higher activity toward C18:3(n-6) acyl-CoA. May participate in the production of monounsaturated and of polyunsaturated VLCFAs of different chain lengths that are involved in multiple biological processes as precursors of membrane lipids and lipid mediators. In conditions where the essential linoleic and alpha linoleic fatty acids are lacking it is also involved in the synthesis of Mead acid from oleic acid. This Mus musculus (Mouse) protein is Very long chain fatty acid elongase 5.